We begin with the raw amino-acid sequence, 350 residues long: Protein pelota homolog (350 aa).

Belongs to the eukaryotic release factor 1 family. Pelota subfamily. In terms of assembly, monomer. The cofactor is a divalent metal cation.

The protein resides in the cytoplasm. Its function is as follows. May function in recognizing stalled ribosomes, interact with stem-loop structures in stalled mRNA molecules, and effect endonucleolytic cleavage of the mRNA. May play a role in the release non-functional ribosomes and degradation of damaged mRNAs. Has endoribonuclease activity. The polypeptide is Protein pelota homolog (Methanosarcina acetivorans (strain ATCC 35395 / DSM 2834 / JCM 12185 / C2A)).